The chain runs to 1023 residues: Probable beta-glucosidase E (1023 aa).

The tract at residues 1-51 (MPKSYTPVHDSIPEEDHFSSDDESNFRLHRIDRSASRSQSPKENEGEPSIL) is disordered. The Cytoplasmic portion of the chain corresponds to 1–128 (MPKSYTPVHD…AVYYSKTWWR (128 aa)). The span at 11–45 (SIPEEDHFSSDDESNFRLHRIDRSASRSQSPKENE) shows a compositional bias: basic and acidic residues. A helical; Signal-anchor for type II membrane protein transmembrane segment spans residues 129–149 (TLVVVIIALGLLVWGFLKYAS). Residues 150 to 1023 (TRGDIWEEYD…NLPLGKPFDP (874 aa)) are Extracellular-facing. Residues N199 and N387 are each glycosylated (N-linked (GlcNAc...) asparagine). D415 is an active-site residue. 2 N-linked (GlcNAc...) asparagine glycosylation sites follow: N458 and N497. Disordered stretches follow at residues 485 to 515 (WESP…GSPG) and 822 to 841 (NPSR…PSYD). The segment covering 827-838 (PAARPPDAVAPP) has biased composition (low complexity). N848 carries an N-linked (GlcNAc...) asparagine glycan. The disordered stretch occupies residues 873-909 (ATTPPPPNPEASGSATDQKPHRTKPSDAGGGAGGNPS). N964 and N979 each carry an N-linked (GlcNAc...) asparagine glycan.

It belongs to the glycosyl hydrolase 3 family.

The protein resides in the cell membrane. The catalysed reaction is Hydrolysis of terminal, non-reducing beta-D-glucosyl residues with release of beta-D-glucose.. It functions in the pathway glycan metabolism; cellulose degradation. Functionally, beta-glucosidases are one of a number of cellulolytic enzymes involved in the degradation of cellulosic biomass. Catalyzes the last step releasing glucose from the inhibitory cellobiose. This Emericella nidulans (strain FGSC A4 / ATCC 38163 / CBS 112.46 / NRRL 194 / M139) (Aspergillus nidulans) protein is Probable beta-glucosidase E (bglE).